We begin with the raw amino-acid sequence, 436 residues long: Eukaryotic peptide chain release factor subunit 1 (436 aa).

The protein belongs to the eukaryotic release factor 1 family. As to quaternary structure, heterodimer of two subunits, one of which binds GTP.

Its subcellular location is the cytoplasm. Its function is as follows. Directs the termination of nascent peptide synthesis (translation) in response to the termination codons UAA and UAG. In B.musculus UGA codes for tryptophan. The chain is Eukaryotic peptide chain release factor subunit 1 (eRF1) from Blepharisma musculus.